The following is a 315-amino-acid chain: p-hydroxyphenylacetate 3-hydroxylase, reductase component (315 aa).

Belongs to the non-flavoprotein flavin reductase family. As to quaternary structure, homodimer. The p-hydroxyphenylacetate 3-hydroxylase (HpaH) is composed of an oxygenase component C2 and a reductase component C1.

It carries out the reaction a reduced flavin + NAD(+) = an oxidized flavin + NADH + 2 H(+). It participates in aromatic compound metabolism; 4-hydroxyphenylacetate degradation; pyruvate and succinate semialdehyde from 4-hydroxyphenylacetate: step 1/7. With respect to regulation, flavin concentrations greater than 15 uM do not inhibit the NADH oxidation activity of the reductase component C1 but do affect the hydroxylation activity of the C1-C2 complex. Maximal reductase activity is achieved only upon HPA binding to the reductase component C1 before interaction with NADH. HPA stimulates the rates of both the reduction of FMN and release of reduced FMN from the reductase component. Its function is as follows. Reductase component of a two-component system that supplies reduced FMN (FMNH2) to the oxygenase component to catalyze the hydroxylation of 4-hydroxyphenylacetic acid, leading to the production of 3,4-dihydroxyphenylacetate (3,4-DHPA). Catalyzes the reduction of free flavins (FMN, FAD and riboflavin) by NADH. Subsequently, the reduced flavins diffuse to the oxygenase component C2. The protein is p-hydroxyphenylacetate 3-hydroxylase, reductase component of Acinetobacter baumannii.